We begin with the raw amino-acid sequence, 438 residues long: Glutamine synthetase (438 aa).

One can recognise a GS beta-grasp domain in the interval 14-98 (EEVEYVDIRF…VHCNVVEPDT (85 aa)). Positions 106-438 (PRIALKAEAY…LAGDVFTKDQ (333 aa)) constitute a GS catalytic domain. Positions 130 and 132 each coordinate Mg(2+). Asp208 contacts ATP. 2 residues coordinate Mg(2+): Glu213 and Glu220. Residues 264-265 (NG) and Gly265 each bind L-glutamate. His269 is a Mg(2+) binding site. ATP-binding positions include 271 to 273 (NMS) and Ser273. Residues Arg321, Glu327, and Arg339 each coordinate L-glutamate. Residues Arg339, Arg344, and Lys352 each contribute to the ATP site. Glu357 serves as a coordination point for Mg(2+). Arg359 is an L-glutamate binding site. Tyr397 is modified (O-AMP-tyrosine).

It belongs to the glutamine synthetase family. Oligomer of 12 subunits arranged in the form of two hexameric ring. Requires Mg(2+) as cofactor.

The protein localises to the cytoplasm. It carries out the reaction L-glutamate + NH4(+) + ATP = L-glutamine + ADP + phosphate + H(+). With respect to regulation, the activity of this enzyme could be controlled by adenylation under conditions of abundant glutamine. Its function is as follows. Catalyzes the ATP-dependent biosynthesis of glutamine from glutamate and ammonia. In Rhodobacter capsulatus (Rhodopseudomonas capsulata), this protein is Glutamine synthetase.